Consider the following 355-residue polypeptide: Transcription factor TCP13 (355 aa).

The interval 1-57 is disordered; the sequence is MNIVSWKDANDEVAGGATTRREREVKEDQEETEVRATSGKTVIKKQPTSISSSSSSW. A TCP domain is found at 74–132; sequence GKDRHSKVCTLRGLRDRRVRLSVPTAIQLYDLQERLGVDQPSKAVDWLLDAAKEEIDEL. Residues 329–355 are disordered; that stretch reads TNSTTTANMSRHLGSERCTSRGSDHHM. The span at 341-355 shows a compositional bias: basic and acidic residues; that stretch reads LGSERCTSRGSDHHM.

Interacts with AHL27 and AHL29. Interacts with SPL. Interacts with KIN10; KIN11 and FLZ3. Expressed in cotyledons, particularly in the vascular region, in leaves, buds, flowers and immature siliques, and, to a lower extent, in roots.

It is found in the nucleus. The protein localises to the plastid. Its subcellular location is the chloroplast. Functionally, plays a pivotal role in the control of morphogenesis of shoot organs by negatively regulating the expression of boundary-specific genes such as CUC genes, probably through the induction of miRNA (e.g. miR164). Binds to the 3'-ACC-5' repeats in the light-responsive promoter (LRP) of psbD, and activates its transcription. Participates in ovule development. The sequence is that of Transcription factor TCP13 (TCP13) from Arabidopsis thaliana (Mouse-ear cress).